Reading from the N-terminus, the 219-residue chain is uncharacterized protein (219 aa).

Composition is skewed to basic and acidic residues over residues methionine 1–arginine 20, alanine 30–valine 39, and glutamine 156–arginine 170. Residues methionine 1 to glycine 195 are disordered.

Belongs to the MISP family.

This is an uncharacterized protein from Homo sapiens (Human).